An 877-amino-acid chain; its full sequence is Alanine--tRNA ligase (877 aa).

Zn(2+)-binding residues include H567, H571, C669, and H673.

This sequence belongs to the class-II aminoacyl-tRNA synthetase family. It depends on Zn(2+) as a cofactor.

Its subcellular location is the cytoplasm. The catalysed reaction is tRNA(Ala) + L-alanine + ATP = L-alanyl-tRNA(Ala) + AMP + diphosphate. Functionally, catalyzes the attachment of alanine to tRNA(Ala) in a two-step reaction: alanine is first activated by ATP to form Ala-AMP and then transferred to the acceptor end of tRNA(Ala). Also edits incorrectly charged Ser-tRNA(Ala) and Gly-tRNA(Ala) via its editing domain. In Lactobacillus delbrueckii subsp. bulgaricus (strain ATCC 11842 / DSM 20081 / BCRC 10696 / JCM 1002 / NBRC 13953 / NCIMB 11778 / NCTC 12712 / WDCM 00102 / Lb 14), this protein is Alanine--tRNA ligase.